A 475-amino-acid polypeptide reads, in one-letter code: MSPEVTCPRRGHLPRFHPRTWVEPVVASSQVAASLYDAGLLLVVKASYGTGGSSNHSASPSPRGALEDQQQRAISNFYIIYNLVVGLSPLLSAYGLGWLSDRYHRKISICMSLLGFLLSRLGLLLKVLLDWPVEVLYGAAALNGLFGGFSAFWSGVMALGSLGSSEGRRSVRLILIDLMLGLAGFCGSMASGHLFKQMAGHSGQGLILTACSVSCASFALLYSLLVLKVPESVAKPSQELPAVDTVSGTVGTYRTLDPDQLDQQYAVGHPPSPGKAKPHKTTIALLFVGAIIYDLAVVGTVDVIPLFVLREPLGWNQVQVGYGMAAGYTIFITSFLGVLVFSRCFRDTTMIMIGMVSFGSGALLLAFVKETYMFYIARAVMLFALIPVTTIRSAMSKLIKGSSYGKVFVILQLSLALTGVVTSTLYNKIYQLTMDMFVGSCFALSSFLSFLAIIPISIVAYKQVPLSPYGDIIEK.

Residues 1-23 lie on the Cytoplasmic side of the membrane; sequence MSPEVTCPRRGHLPRFHPRTWVE. Residues 24-44 form a helical membrane-spanning segment; sequence PVVASSQVAASLYDAGLLLVV. Residues 45–78 lie on the Extracellular side of the membrane; sequence KASYGTGGSSNHSASPSPRGALEDQQQRAISNFY. Asn-55 carries an N-linked (GlcNAc...) asparagine glycan. Residues 79–99 traverse the membrane as a helical segment; it reads IIYNLVVGLSPLLSAYGLGWL. The Cytoplasmic segment spans residues 100–108; the sequence is SDRYHRKIS. The helical transmembrane segment at 109–129 threads the bilayer; sequence ICMSLLGFLLSRLGLLLKVLL. Residues 130 to 138 are Extracellular-facing; it reads DWPVEVLYG. The chain crosses the membrane as a helical span at residues 139–159; it reads AAALNGLFGGFSAFWSGVMAL. Residues 160 to 172 are Cytoplasmic-facing; that stretch reads GSLGSSEGRRSVR. A helical transmembrane segment spans residues 173 to 193; that stretch reads LILIDLMLGLAGFCGSMASGH. Topologically, residues 194 to 205 are extracellular; the sequence is LFKQMAGHSGQG. Residues 206 to 226 form a helical membrane-spanning segment; it reads LILTACSVSCASFALLYSLLV. At 227–282 the chain is on the cytoplasmic side; it reads LKVPESVAKPSQELPAVDTVSGTVGTYRTLDPDQLDQQYAVGHPPSPGKAKPHKTT. A helical transmembrane segment spans residues 283 to 303; it reads IALLFVGAIIYDLAVVGTVDV. The Extracellular segment spans residues 304–320; that stretch reads IPLFVLREPLGWNQVQV. Residues 321–341 traverse the membrane as a helical segment; sequence GYGMAAGYTIFITSFLGVLVF. Over 342 to 347 the chain is Cytoplasmic; it reads SRCFRD. The chain crosses the membrane as a helical span at residues 348–368; sequence TTMIMIGMVSFGSGALLLAFV. Residues 369 to 370 lie on the Extracellular side of the membrane; it reads KE. Residues 371-391 form a helical membrane-spanning segment; sequence TYMFYIARAVMLFALIPVTTI. The Cytoplasmic portion of the chain corresponds to 392 to 406; sequence RSAMSKLIKGSSYGK. The helical transmembrane segment at 407–427 threads the bilayer; the sequence is VFVILQLSLALTGVVTSTLYN. At 428–435 the chain is on the extracellular side; sequence KIYQLTMD. The chain crosses the membrane as a helical span at residues 436 to 456; sequence MFVGSCFALSSFLSFLAIIPI. Residues 457–475 lie on the Cytoplasmic side of the membrane; the sequence is SIVAYKQVPLSPYGDIIEK.

The protein belongs to the major facilitator superfamily. SLC46A family. In terms of processing, glycosylated. In terms of tissue distribution, strongly expressed in the adult thymus. Expressed in spleen, lymph nodes, thymus, PBL, bone marrow and fetal liver. Expressed in monocytes and pre-dendridic cells.

The protein localises to the endosome membrane. It localises to the cell membrane. It catalyses the reaction N-acetyl-beta-D-glucosaminyl-(1-&gt;4)-1,6-anhydro-N-acetyl-beta-D-muramoyl-L-alanyl-gamma-D-glutamyl-meso-2,6-diaminopimeloyl-D-alanine(out) + n H(+)(out) = N-acetyl-beta-D-glucosaminyl-(1-&gt;4)-1,6-anhydro-N-acetyl-beta-D-muramoyl-L-alanyl-gamma-D-glutamyl-meso-2,6-diaminopimeloyl-D-alanine(in) + n H(+)(in). The catalysed reaction is L-alanyl-gamma-D-glutamyl-meso-2,6-diaminopimelate(out) + n H(+)(out) = L-alanyl-gamma-D-glutamyl-meso-2,6-diaminopimelate(in) + n H(+)(in). It carries out the reaction N-acetyl-D-muramoyl-L-alanyl-D-isoglutamine(out) + n H(+)(out) = N-acetyl-D-muramoyl-L-alanyl-D-isoglutamine(in) + n H(+)(in). The enzyme catalyses 2',3'-cGAMP(out) + n H(+)(out) = 2',3'-cGAMP(in) + n H(+)(in). It catalyses the reaction 3',3'-cGAMP(out) + n H(+)(out) = 3',3'-cGAMP(in) + n H(+)(in). Functionally, proton-coupled transporter that delivers pathogen-associated or danger-associated molecular patterns to cytosolic pattern recognition receptors as part of the innate immune response to microbes or tissue injury. Has selectivity toward muropeptides that contain the amino acid diaminopimelic acid (DAP-type peptidoglycan muropeptides) including Tri-DAP and tracheal toxin (TCT), common in Gram-negative bacteria and Gram-positive bacilli. In the context of immune recognition of skin microbiota, shuttles bacterial muropeptides across the endolysosomal membranes into the cytosol for recognition by NOD1, triggering MYD88-dependent secretion of IL1A and neutrophil recruitment in a pyroptosis-type inflammatory process. To a lesser extent and redundantly, transports muramyl dipeptides derived from most bacterial proteoglycans, eliciting NOD2 receptor activation and downstream inflammatory responses. Postulated to function as a dominant importer of cyclic GMP-AMP dinucleotides (cGAMPs) in monocyte and macrophage cell lineages. Selectively imports cGAMPs derived from pathogenic bacteria such as 3'3'-cGAMP thus providing for differential immune recognition of pathogenic versus commensal bacteria. During tumorigenesis may transport extracellular tumor-derived 2'3'-cGAMP across the plasma membrane of M1-polarized macrophages to activate the anti-tumoral stimulator of interferon genes (STING) pathway. The transport mechanism, its electrogenicity and stoichiometry remain to be elucidated. This Homo sapiens (Human) protein is Solute carrier family 46 member 2.